We begin with the raw amino-acid sequence, 186 residues long: Ribosome-recycling factor (186 aa).

This sequence belongs to the RRF family.

The protein localises to the cytoplasm. Responsible for the release of ribosomes from messenger RNA at the termination of protein biosynthesis. May increase the efficiency of translation by recycling ribosomes from one round of translation to another. The polypeptide is Ribosome-recycling factor (Rubrobacter xylanophilus (strain DSM 9941 / JCM 11954 / NBRC 16129 / PRD-1)).